Reading from the N-terminus, the 207-residue chain is Large ribosomal subunit protein uL4 (207 aa).

A disordered region spans residues 49-78; it reads HAVKNRSAVRGGGKKPWRQKGTGRARQGSI. A compositionally biased stretch (basic residues) spans 60–71; sequence GGKKPWRQKGTG.

Belongs to the universal ribosomal protein uL4 family. As to quaternary structure, part of the 50S ribosomal subunit.

In terms of biological role, one of the primary rRNA binding proteins, this protein initially binds near the 5'-end of the 23S rRNA. It is important during the early stages of 50S assembly. It makes multiple contacts with different domains of the 23S rRNA in the assembled 50S subunit and ribosome. Its function is as follows. Forms part of the polypeptide exit tunnel. The protein is Large ribosomal subunit protein uL4 of Ligilactobacillus salivarius (strain UCC118) (Lactobacillus salivarius).